We begin with the raw amino-acid sequence, 789 residues long: Protein translocase subunit SecA 2 (789 aa).

ATP-binding positions include Gln79, 97–101 (GEGKT), and Asp487.

This sequence belongs to the SecA family. In terms of assembly, monomer and homodimer. Part of the essential Sec protein translocation apparatus which comprises SecA, SecYEG and auxiliary proteins SecDF. Other proteins may also be involved.

The protein resides in the cell membrane. Its subcellular location is the cytoplasm. The enzyme catalyses ATP + H2O + cellular proteinSide 1 = ADP + phosphate + cellular proteinSide 2.. In terms of biological role, part of the Sec protein translocase complex. Interacts with the SecYEG preprotein conducting channel. Has a central role in coupling the hydrolysis of ATP to the transfer of proteins into and across the cell membrane, serving as an ATP-driven molecular motor driving the stepwise translocation of polypeptide chains across the membrane. This chain is Protein translocase subunit SecA 2, found in Pediococcus pentosaceus (strain ATCC 25745 / CCUG 21536 / LMG 10740 / 183-1w).